The primary structure comprises 160 residues: Regulatory protein RecX (160 aa).

It belongs to the RecX family.

Its subcellular location is the cytoplasm. Its function is as follows. Modulates RecA activity. This chain is Regulatory protein RecX, found in Xanthomonas oryzae pv. oryzae (strain MAFF 311018).